Here is a 327-residue protein sequence, read N- to C-terminus: tRNA-dihydrouridine(20/20a) synthase (327 aa).

FMN contacts are provided by residues 17-19 (PML) and Gln69. Cys99 acts as the Proton donor in catalysis. FMN-binding positions include Lys138, His170, 210–212 (NGG), and 232–233 (GR).

It belongs to the Dus family. DusA subfamily. It depends on FMN as a cofactor.

It catalyses the reaction 5,6-dihydrouridine(20) in tRNA + NADP(+) = uridine(20) in tRNA + NADPH + H(+). It carries out the reaction 5,6-dihydrouridine(20) in tRNA + NAD(+) = uridine(20) in tRNA + NADH + H(+). The enzyme catalyses 5,6-dihydrouridine(20a) in tRNA + NADP(+) = uridine(20a) in tRNA + NADPH + H(+). The catalysed reaction is 5,6-dihydrouridine(20a) in tRNA + NAD(+) = uridine(20a) in tRNA + NADH + H(+). Functionally, catalyzes the synthesis of 5,6-dihydrouridine (D), a modified base found in the D-loop of most tRNAs, via the reduction of the C5-C6 double bond in target uridines. Specifically modifies U20 and U20a in tRNAs. This Pasteurella multocida (strain Pm70) protein is tRNA-dihydrouridine(20/20a) synthase.